A 66-amino-acid polypeptide reads, in one-letter code: Period circadian protein (66 aa).

Residues 1-66 (EGSGGSGSSG…VTLTESLLNK (66 aa)) form a disordered region. Residues 9–31 (SGNFTTGSNIHMSSVTNTSNAGT) show a composition bias toward low complexity. 4 consecutive repeat copies span residues 30–31 (GT), 32–33 (GT), 35–36 (GT), and 37–38 (GN). Residues 30-53 (GTGTSGTGNSGGGSGGGTGPGSGA) form a 4 X 2 AA tandem repeats of G-[TN] region. The span at 32–51 (GTSGTGNSGGGSGGGTGPGS) shows a compositional bias: gly residues.

Forms a heterodimer with timeless (TIM); the complex then translocates into the nucleus. Post-translationally, phosphorylated with a circadian rhythmicity, probably by the double-time protein (dbt). Phosphorylation could be implicated in the stability of per monomer and in the formation of heterodimer per-tim.

Its subcellular location is the nucleus. The protein localises to the cytoplasm. It is found in the perinuclear region. In terms of biological role, essential for biological clock functions. Determines the period length of circadian and ultradian rhythms; an increase in PER dosage leads to shortened circadian rhythms and a decrease leads to lengthened circadian rhythms. Essential for the circadian rhythmicity of locomotor activity, eclosion behavior, and for the rhythmic component of the male courtship song that originates in the thoracic nervous system. The biological cycle depends on the rhythmic formation and nuclear localization of the TIM-PER complex. Light induces the degradation of TIM, which promotes elimination of PER. Nuclear activity of the heterodimer coordinatively regulates PER and TIM transcription through a negative feedback loop. Behaves as a negative element in circadian transcriptional loop. Does not appear to bind DNA, suggesting indirect transcriptional inhibition. The sequence is that of Period circadian protein (per) from Drosophila saltans (Fruit fly).